A 522-amino-acid polypeptide reads, in one-letter code: Target of rapamycin complex 2 subunit MAPKAP1 (522 aa).

N-acetylalanine is present on A2. The tract at residues 2-184 (AFLDNPTIIL…KKIDVYLPLH (183 aa)) is interaction with MAP3K2. Residues 2–267 (AFLDNPTIIL…GFSTLALVEK (266 aa)) are interaction with NBN. The disordered stretch occupies residues 38 to 59 (LEKTHPPSVPGDSGSEVQGSSG). Phosphothreonine; by PKB/AKT1 and RPS6KB1 is present on T86. S128 is modified (phosphoserine; by PKC). The CRIM domain maps to 139–267 (QSILSVRLEQ…GFSTLALVEK (129 aa)). Phosphoserine is present on residues S186, S315, and S356. The segment at 279–353 (LFVRINAAHG…QNAWEFCLVR (75 aa)) is SIN1-type RBD. The 106-residue stretch at 382 to 487 (HYKSFKVSMI…IVLKVNYILE (106 aa)) folds into the SIN1-type PH domain. R393 serves as a coordination point for a 1,2-diacyl-sn-glycero-3-phospho-(1D-myo-inositol-3,4,5-trisphosphate). The residue at position 398 (T398) is a Phosphothreonine; by RPS6KB1. K428 and K464 together coordinate a 1,2-diacyl-sn-glycero-3-phospho-(1D-myo-inositol-3,4,5-trisphosphate). The segment at 468–522 (FESDAATVSEIVLKVNYILESRASTARADYLAQKQRKLNRRTSFSFQKEKKSGQQ) is interaction with ATF2. A Phosphoserine modification is found at S510.

It belongs to the SIN1 family. In terms of assembly, component of the mechanistic target of rapamycin complex 2 (mTORC2), consisting in two heterotretramers composed of MTOR, MLST8, RICTOR and MAPKAP1/SIN1. The mTORC2 core complex associates with PRR5/PROTOR1 and/or PRR5L/PROTOR2. Contrary to mTORC1, mTORC2 does not bind to and is not sensitive to FKBP12-rapamycin. Interacts with MAP3K2. Interacts with ATF2. Interacts with MAPK8. Interacts with GTP-bound HRAS and KRAS; inhibiting their activity. Interacts with IFNAR2. In terms of processing, phosphorylation at Ser-128 by PKC promotes relocalization to the perinuclear region, where the mTORC2 complex specifically mediates phosphorylation of SGK1. Phosphorylated at Thr-86 by AKT1 or RPS6KB1 in the presence of growth factors; the effect of this phosphorylation is however unclear. According to two studies, phosphorylation at Thr-86 by AKT1 is part of a positive feedback loop that increases mTORC2 activation. According to another study, phosphorylation at Thr-86 and Thr-398 by RPS6KB1 promotes dissociation from the mTORC2 complex, leading to inhibit mTORC2 signaling. Uniquitously expressed, with highest levels in testis, kidney and liver. Present in renal tubule cells (at protein level).

The protein resides in the cell membrane. Its subcellular location is the endoplasmic reticulum membrane. It is found in the early endosome membrane. It localises to the late endosome membrane. The protein localises to the lysosome membrane. The protein resides in the golgi apparatus membrane. Its subcellular location is the mitochondrion outer membrane. It is found in the cytoplasm. It localises to the perinuclear region. The protein localises to the nucleus. With respect to regulation, phosphatidylinositol 3,4,5-trisphosphate (PI(3,4,5)P3) promotes MTOR activation by relieving MAPKAP1/SIN1-mediated inhibition of MTOR that takes place in absence of PI(3,4,5)P3. In terms of biological role, component of the mechanistic target of rapamycin complex 2 (mTORC2), which transduces signals from growth factors to pathways involved in proliferation, cytoskeletal organization, lipogenesis and anabolic output. In response to growth factors, mTORC2 phosphorylates and activates AGC protein kinase family members, including AKT (AKT1, AKT2 and AKT3), PKC (PRKCA, PRKCB and PRKCE) and SGK1. In contrast to mTORC1, mTORC2 is nutrient-insensitive. Within the mTORC2 complex, MAPKAP1/SIN1 acts as a substrate adapter which recognizes and binds AGC protein kinase family members for phosphorylation by MTOR. mTORC2 plays a critical role in AKT1 activation by mediating phosphorylation of different sites depending on the context, such as 'Thr-450', 'Ser-473', 'Ser-477' or 'Thr-479', facilitating the phosphorylation of the activation loop of AKT1 on 'Thr-308' by PDPK1/PDK1 which is a prerequisite for full activation. mTORC2 catalyzes the phosphorylation of SGK1 at 'Ser-422' and of PRKCA on 'Ser-657'. The mTORC2 complex also phosphorylates various proteins involved in insulin signaling, such as FBXW8 and IGF2BP1. mTORC2 acts upstream of Rho GTPases to regulate the actin cytoskeleton, probably by activating one or more Rho-type guanine nucleotide exchange factors. mTORC2 promotes the serum-induced formation of stress-fibers or F-actin. MAPKAP1 inhibits MAP3K2 by preventing its dimerization and autophosphorylation. Inhibits HRAS and KRAS independently of mTORC2 complex. Enhances osmotic stress-induced phosphorylation of ATF2 and ATF2-mediated transcription. Involved in ciliogenesis, regulates cilia length through its interaction with CCDC28B independently of mTORC2 complex. This is Target of rapamycin complex 2 subunit MAPKAP1 from Mus musculus (Mouse).